The sequence spans 186 residues: MINRSSGKDRDRSRSGDKELRINHKIKAREVRVIFDNGTQSVLPIEDAIKCARDAELDLVEISPNSVPPVCKIIDYGKYKFHQEKRQKEQKRNQKIIKLKEVRMQPKIDTHDLDFKYRNILGFLKEGNKVKVTIRFRGRELAHTHLGYGILESILERVGESNYVLESPAKMEGKTMFLIIAPKSKK.

The disordered stretch occupies residues 1–21; the sequence is MINRSSGKDRDRSRSGDKELR.

It belongs to the IF-3 family. Monomer.

The protein resides in the cytoplasm. Functionally, IF-3 binds to the 30S ribosomal subunit and shifts the equilibrium between 70S ribosomes and their 50S and 30S subunits in favor of the free subunits, thus enhancing the availability of 30S subunits on which protein synthesis initiation begins. The chain is Translation initiation factor IF-3 from Borrelia turicatae (strain 91E135).